Here is a 143-residue protein sequence, read N- to C-terminus: ATP synthase F(0) complex subunit C2, mitochondrial (143 aa).

The N-terminal 68 residues, 1 to 68 (MYTCAKFVST…RSFQTSAISR (68 aa)), are a transit peptide targeting the mitochondrion. A helical membrane pass occupies residues 84 to 104 (VGVAGSGAGIGTVFGSLIIGY). K111 carries the post-translational modification N6,N6,N6-trimethyllysine. The helical transmembrane segment at 119-139 (ILGFALSEAMGLFCLMVAFLI) threads the bilayer.

The protein belongs to the ATPase C chain family. As to quaternary structure, F-type ATPases have 2 components, CF(1) - the catalytic core - and CF(0) - the membrane proton channel. CF(1) has five subunits: alpha(3), beta(3), gamma(1), delta(1), epsilon(1). CF(0) has three main subunits: a, b and c. Interacts with DNAJC30; interaction is direct. Post-translationally, trimethylated by ATPSCKMT at Lys-111. Methylation is required for proper incorporation of the C subunit into the ATP synthase complex and mitochondrial respiration.

The protein localises to the mitochondrion membrane. In terms of biological role, mitochondrial membrane ATP synthase (F(1)F(0) ATP synthase or Complex V) produces ATP from ADP in the presence of a proton gradient across the membrane which is generated by electron transport complexes of the respiratory chain. F-type ATPases consist of two structural domains, F(1) - containing the extramembraneous catalytic core and F(0) - containing the membrane proton channel, linked together by a central stalk and a peripheral stalk. During catalysis, ATP synthesis in the catalytic domain of F(1) is coupled via a rotary mechanism of the central stalk subunits to proton translocation. Part of the complex F(0) domain. A homomeric c-ring of probably 10 subunits is part of the complex rotary element. The protein is ATP synthase F(0) complex subunit C2, mitochondrial of Ovis aries (Sheep).